Reading from the N-terminus, the 207-residue chain is MVIVVDHPLVQHKLTKLRDKNTGPKEFRELLFEISSLMLYEVTKNLPTKEVEVETPLGIAKGKVLDNKDLAIVPILRAGLVMADGMLQILPSAKVGHIGLYRDPETLKPVQYYTKLPEDIDKREVIVVDPMLATGGSAVAAISILKAKGVKDIKFVCIISAPEGIETLRNSHPDVDIYTAAIDERLNDHGYIIPGLGDAGDRLFGTK.

5-phospho-alpha-D-ribose 1-diphosphate contacts are provided by residues R77, R102, and 129–137 (DPMLATGGS). Uracil is bound by residues I192 and 197 to 199 (GDA). D198 contacts 5-phospho-alpha-D-ribose 1-diphosphate.

This sequence belongs to the UPRTase family. Mg(2+) serves as cofactor.

It carries out the reaction UMP + diphosphate = 5-phospho-alpha-D-ribose 1-diphosphate + uracil. The protein operates within pyrimidine metabolism; UMP biosynthesis via salvage pathway; UMP from uracil: step 1/1. Its activity is regulated as follows. Allosterically activated by GTP. Functionally, catalyzes the conversion of uracil and 5-phospho-alpha-D-ribose 1-diphosphate (PRPP) to UMP and diphosphate. The sequence is that of Uracil phosphoribosyltransferase from Dictyoglomus thermophilum (strain ATCC 35947 / DSM 3960 / H-6-12).